Here is a 296-residue protein sequence, read N- to C-terminus: Coatomer subunit epsilon (296 aa).

This sequence belongs to the COPE family. As to quaternary structure, oligomeric complex that consists of at least the alpha, beta, beta', gamma, delta, epsilon and zeta subunits. Interacts with the ESCRT-0 subunit VPS27.

The protein localises to the cytoplasm. Its subcellular location is the golgi apparatus membrane. It localises to the cytoplasmic vesicle. The protein resides in the COPI-coated vesicle membrane. Functionally, the coatomer is a cytosolic protein complex that binds to dilysine motifs and reversibly associates with Golgi non-clathrin-coated vesicles, which further mediate biosynthetic protein transport from the ER, via the Golgi up to the trans Golgi network. The coatomer complex is required for budding from Golgi membranes, and is essential for the retrograde Golgi-to-ER transport of dilysine-tagged proteins. The sequence is that of Coatomer subunit epsilon (SEC28) from Saccharomyces cerevisiae (strain ATCC 204508 / S288c) (Baker's yeast).